The primary structure comprises 466 residues: Muscarinic acetylcholine receptor M2 (466 aa).

At 1-25 (MNNSTYINSSSENVIALESPYKTIE) the chain is on the extracellular side. 3 N-linked (GlcNAc...) asparagine glycosylation sites follow: Asn-2, Asn-3, and Asn-8. Residues 26–48 (VVFIVLVAGSLSLVTIIGNILVM) traverse the membrane as a helical segment. Residues 49–62 (VSIKVNRHLQTVNN) are Cytoplasmic-facing. The chain crosses the membrane as a helical span at residues 63–83 (YFLFSLACADLIIGIFSMNLY). At 84–100 (TLYTVIGYWPLGPVVCD) the chain is on the extracellular side. Cys-99 and Cys-179 are joined by a disulfide. Residues 101 to 122 (LWLALDYVVSNASVMNLLIISF) form a helical membrane-spanning segment. The Important for signaling motif lies at 123–125 (DRY). At 123–142 (DRYFCVTKPLTYPVKRTTKM) the chain is on the cytoplasmic side. The helical transmembrane segment at 143–165 (AGMMIAAAWVLSFILWAPAILFW) threads the bilayer. Residues 166-187 (QFIVGGRTVPDKDCYIQFFSNP) are Extracellular-facing. A helical membrane pass occupies residues 188 to 212 (AVTFGTAIAAFYLPVIIMTVLYWQI). Residues 213–387 (SRASKSRIKK…PPSREKKVTR (175 aa)) lie on the Cytoplasmic side of the membrane. Disordered regions lie at residues 223 to 265 (GKKE…KVQN) and 279 to 315 (QGEE…SASQ). Composition is skewed to polar residues over residues 228–238 (AQNQDPVSPSL) and 246–256 (PNNNNIPTSSD). The segment covering 287–298 (NDSTSVSVVPSN) has biased composition (low complexity). A helical membrane pass occupies residues 388–410 (TILAILLAFIITWTPYNVMVLIN). Residues 411–418 (SFCASCIP) are Extracellular-facing. Cys-413 and Cys-416 form a disulfide bridge. The chain crosses the membrane as a helical span at residues 419 to 442 (GTVWTIGYWLCYINSTINPACYAL). The Important for signaling motif lies at 436-440 (NPACY). At 443–466 (CNATFKKTFKHLLMCHYKNIGATR) the chain is on the cytoplasmic side. 3 positions are modified to phosphothreonine: Thr-446, Thr-450, and Thr-465.

This sequence belongs to the G-protein coupled receptor 1 family. Muscarinic acetylcholine receptor subfamily. CHRM2 sub-subfamily.

It is found in the cell membrane. Its subcellular location is the postsynaptic cell membrane. Its function is as follows. The muscarinic acetylcholine receptor mediates various cellular responses, including inhibition of adenylate cyclase, breakdown of phosphoinositides and modulation of potassium channels through the action of G proteins. Primary transducing effect is adenylate cyclase inhibition. Signaling promotes phospholipase C activity, leading to the release of inositol trisphosphate (IP3); this then triggers calcium ion release into the cytosol. The polypeptide is Muscarinic acetylcholine receptor M2 (CHRM2) (Gallus gallus (Chicken)).